A 193-amino-acid chain; its full sequence is Bradykinin-potentiating and C-type natriuretic peptides (193 aa).

The first 23 residues, 1–23, serve as a signal peptide directing secretion; that stretch reads MFVSRLAASGLLLLALLALSLDG. Positions 24–27 are excised as a propeptide; the sequence is KPVH. The interval 25-173 is disordered; the sequence is PVHQSKPGRS…RMKGLAKKAM (149 aa). A Pyrrolidone carboxylic acid modification is found at Gln-28. 2 consecutive propeptides follow at residues 40–43 and 58–64; these read LSAQ and LSVQQWS. Gln-65 is subject to Pyrrolidone carboxylic acid. Residues 75-169 constitute a propeptide that is removed on maturation; sequence VVVQPHESPA…GGARRMKGLA (95 aa). Positions 95-123 are enriched in low complexity; sequence SPGPEAASGPAAPHRLPKSKGASATSAAS. A compositionally biased stretch (basic and acidic residues) spans 125-150; sequence PMRDLRTDGKQERQKWGRMVQPDHHA. The segment covering 152–162 has biased composition (gly residues); it reads PGGGGGGGGGA. The segment covering 163–173 has biased composition (basic residues); that stretch reads RRMKGLAKKAM. Cys-177 and Cys-193 are oxidised to a cystine.

The protein in the N-terminal section; belongs to the bradykinin-potentiating peptide family. It in the C-terminal section; belongs to the natriuretic peptide family. As to expression, expressed by the venom gland.

It is found in the secreted. Bradykinin-potentiating peptide both inhibits the activity of the angiotensin-converting enzyme (ACE) and enhances the action of bradykinin by inhibiting the peptidases that inactivate it. It acts as an indirect hypotensive agent. Neither synthetic Tf1, nor synthetic Tf2 show bradykinin-potentiating effects. In terms of biological role, has a vasorelaxant activity in rat aortic strips and a diuretic potency in anesthetized rats. Functionally, has a vasorelaxant activity in rat aortic strips and a diuretic potency in anesthetized rats. Is as potent as Tf-CNP. This is Bradykinin-potentiating and C-type natriuretic peptides from Protobothrops flavoviridis (Habu).